The following is a 243-amino-acid chain: Zinc import ATP-binding protein ZnuC (243 aa).

In terms of domain architecture, ABC transporter spans 25–242 (LVVDSITLFY…AKFMSVFPEN (218 aa)). Residue 57–64 (GPNGGGKT) coordinates ATP.

This sequence belongs to the ABC transporter superfamily. Zinc importer (TC 3.A.1.15.5) family. The complex is composed of two ATP-binding proteins (ZnuC), two transmembrane proteins (ZnuB) and a solute-binding protein (ZnuA).

The protein resides in the cell inner membrane. The catalysed reaction is Zn(2+)(out) + ATP(in) + H2O(in) = Zn(2+)(in) + ADP(in) + phosphate(in) + H(+)(in). Part of the ABC transporter complex ZnuABC involved in zinc import. Responsible for energy coupling to the transport system. This chain is Zinc import ATP-binding protein ZnuC, found in Anaplasma phagocytophilum (strain HZ).